Reading from the N-terminus, the 56-residue chain is Large ribosomal subunit protein bL32 (56 aa).

The interval 1–39 (MAVQQNKKSRSKRGMRRSHDSLSTAQLSVDATSGELHRR) is disordered. Residues 7–16 (KKSRSKRGMR) are compositionally biased toward basic residues. Polar residues predominate over residues 21-31 (SLSTAQLSVDA).

This sequence belongs to the bacterial ribosomal protein bL32 family.

The polypeptide is Large ribosomal subunit protein bL32 (Shewanella piezotolerans (strain WP3 / JCM 13877)).